The following is a 117-amino-acid chain: Prefoldin subunit beta (117 aa).

The protein belongs to the prefoldin subunit beta family. As to quaternary structure, heterohexamer of two alpha and four beta subunits.

It is found in the cytoplasm. In terms of biological role, molecular chaperone capable of stabilizing a range of proteins. Seems to fulfill an ATP-independent, HSP70-like function in archaeal de novo protein folding. This Methanosarcina acetivorans (strain ATCC 35395 / DSM 2834 / JCM 12185 / C2A) protein is Prefoldin subunit beta (pfdB).